The following is a 464-amino-acid chain: Serine carboxypeptidase-like 22 (464 aa).

The first 22 residues, 1-22 (MARTHLLFLLFVLLSLATSSTS), serve as a signal peptide directing secretion. Residues Asn52, Asn113, and Asn137 are each glycosylated (N-linked (GlcNAc...) asparagine). 3 disulfides stabilise this stretch: Cys86-Cys346, Cys247-Cys258, and Cys282-Cys314. The active site involves Ser179. Residues Asn290 and Asn335 are each glycosylated (N-linked (GlcNAc...) asparagine). Catalysis depends on residues Asp385 and His437.

The protein belongs to the peptidase S10 family. In terms of tissue distribution, expression not detected.

It localises to the secreted. Its function is as follows. Probable carboxypeptidase. The polypeptide is Serine carboxypeptidase-like 22 (SCPL22) (Arabidopsis thaliana (Mouse-ear cress)).